A 213-amino-acid chain; its full sequence is Orotate phosphoribosyltransferase (213 aa).

K26 lines the 5-phospho-alpha-D-ribose 1-diphosphate pocket. Position 34-35 (34-35 (FF)) interacts with orotate. Residues 72–73 (YK), R99, K100, K103, H105, and 124–132 (DDVITAGTA) each bind 5-phospho-alpha-D-ribose 1-diphosphate. 2 residues coordinate orotate: T128 and R156.

This sequence belongs to the purine/pyrimidine phosphoribosyltransferase family. PyrE subfamily. As to quaternary structure, homodimer. It depends on Mg(2+) as a cofactor.

It catalyses the reaction orotidine 5'-phosphate + diphosphate = orotate + 5-phospho-alpha-D-ribose 1-diphosphate. Its pathway is pyrimidine metabolism; UMP biosynthesis via de novo pathway; UMP from orotate: step 1/2. In terms of biological role, catalyzes the transfer of a ribosyl phosphate group from 5-phosphoribose 1-diphosphate to orotate, leading to the formation of orotidine monophosphate (OMP). The chain is Orotate phosphoribosyltransferase from Salmonella typhi.